Reading from the N-terminus, the 1061-residue chain is RecBCD enzyme subunit RecC (1061 aa).

It belongs to the RecC family. Heterotrimer of RecB, RecC and RecD. All subunits contribute to DNA-binding.

Its function is as follows. A helicase/nuclease that prepares dsDNA breaks (DSB) for recombinational DNA repair. Binds to DSBs and unwinds DNA via a highly rapid and processive ATP-dependent bidirectional helicase activity. Unwinds dsDNA until it encounters a Chi (crossover hotspot instigator) sequence from the 3' direction. Cuts ssDNA a few nucleotides 3' to the Chi site. The properties and activities of the enzyme are changed at Chi. The Chi-altered holoenzyme produces a long 3'-ssDNA overhang and facilitates RecA-binding to the ssDNA for homologous DNA recombination and repair. Holoenzyme degrades any linearized DNA that is unable to undergo homologous recombination. In the holoenzyme this subunit recognizes the wild-type Chi sequence, and when added to isolated RecB increases its ATP-dependent helicase processivity. The protein is RecBCD enzyme subunit RecC of Buchnera aphidicola subsp. Schizaphis graminum (strain Sg).